The sequence spans 168 residues: Desumoylating isopeptidase 1 (168 aa).

The region spanning 7–149 (YPVKLYVYDL…FGQALRPFLD (143 aa)) is the PPPDE domain. Histidine 38 is a catalytic residue. Residues 83–91 (IFLEYLSSL) carry the Nuclear export signal 1 motif. Cysteine 108 is an active-site residue. The Nuclear export signal 2 motif lies at 139 to 153 (PFGQALRPFLDSIQI).

It belongs to the DeSI family. Homodimer. Interacts with UBQLN4; leading to the export of UBQLN4 from the nucleus.

Its subcellular location is the cytoplasm. It localises to the nucleus. The catalysed reaction is S-hexadecanoyl-L-cysteinyl-[protein] + H2O = L-cysteinyl-[protein] + hexadecanoate + H(+). Functionally, protease which deconjugates SUMO1, SUMO2 and SUMO3 from some substrate proteins. Has isopeptidase but not SUMO-processing activity. Desumoylates ZBTB46. Collaborates with UBQLN4 in the export of ubiquitinated proteins from the nucleus to the cytoplasm. Exhibits palmitoyl protein thioesterase (S-depalmitoylation) activity towards synthetic substrates 4-methylumbelliferyl-6-S-palmitoyl-beta-D-glucopyranoside and S-depalmitoylation probe 5 (DPP-5). This Rattus norvegicus (Rat) protein is Desumoylating isopeptidase 1 (Desi1).